The sequence spans 541 residues: MGSEKKENGVILEVEPKPSNGFTSKAVDLLEKIIVKLFYDSSLPHHWLSGNFAPVKDETPPVKDLTVQGHLPDCLNGEFVRVGPNPKFSPVAGYHWFDGDGMIHGLRIKDGKASYVSRFVKTSRFKQEEYFNGSKFMKIGDLKGLFGLLMVNMQMLRAKLKILDVSYGHGTANTALVYHHQKLLALSEGDKPYAIKVFEDGDLQTLGMLDYDKRLGHNFTAHPKVDPFTGEMFTFGYSHTAPYVTYRVISKDGFMQDPVPITISDPVMMHDFAITENYSIFMDLPLYFRPKEMVKNKTLIFSFDSTKKARFGVLPRYAKDDKHIRWFELPNCFIFHNANAWEEEDEIVLITCRLENPNLDVVGGAVKEKLDNFSNELYEMRFNMKTGEASQKKLSASTVDFPRVNESYTGRKQRYVYGTTLDSIAKVTGIIKFDLHAEPDSGKTKLEVGGNVQGLYDLGPGRFGSEAVYVPRVPGTDSEEDDGYLIFFVHDENTGKSFVHVIDAKRMSAEPVAVVELPQRVPYGFHAFFVTEDQLQEQAKF.

Fe cation is bound by residues histidine 222, histidine 270, histidine 336, and histidine 526.

It belongs to the carotenoid oxygenase family. Requires Fe(2+) as cofactor.

It catalyses the reaction all-trans-zeaxanthin + 2 O2 = 4,9-dimethyldodeca-2,4,6,8,10-pentaenedial + 2 (3R)-hydroxy-beta-ionone. In terms of biological role, cleaves a variety of carotenoids at the 9-10 and 9'-10' double bonds. Probably not involved in abscisic acid biosynthesis. This chain is Carotenoid 9,10(9',10')-cleavage dioxygenase 1 (CCD1), found in Pisum sativum (Garden pea).